The following is a 193-amino-acid chain: MTEYLLLFIGTVLVNNFVLVKFLGLCPFMGVSKKLETAIGMGLATTFVITLASICAWLVNHLILLPLDLVYLRTMAYILVIAVVVQFTEMVVRKTSPDLYRLLGIFLPLITTNCAVLGVPLLSVNLNHTFMQAAIYGFSASIGFSLVMVLFAGVRERLVLADVPAPFKGSSIALVTAGLMALAFMGFAGLVKF.

The next 6 helical transmembrane spans lie at 5–25 (LLLFIGTVLVNNFVLVKFLGL), 47–67 (FVITLASICAWLVNHLILLPL), 72–92 (LRTMAYILVIAVVVQFTEMVV), 102–122 (LLGIFLPLITTNCAVLGVPLL), 134–154 (AIYGFSASIGFSLVMVLFAGV), and 171–191 (SIALVTAGLMALAFMGFAGLV).

Belongs to the NqrDE/RnfAE family. The complex is composed of six subunits: RnfA, RnfB, RnfC, RnfD, RnfE and RnfG.

It is found in the cell inner membrane. Functionally, part of a membrane-bound complex that couples electron transfer with translocation of ions across the membrane. This is Ion-translocating oxidoreductase complex subunit A from Erwinia tasmaniensis (strain DSM 17950 / CFBP 7177 / CIP 109463 / NCPPB 4357 / Et1/99).